We begin with the raw amino-acid sequence, 307 residues long: Actin maturation protease (307 aa).

The disordered stretch occupies residues 1–34 (MSLENDAAAPPPPPLPPPPPPQPPSLARSESSKK). A compositionally biased stretch (pro residues) spans 9–24 (APPPPPLPPPPPPQPP). The tract at residues 80 to 200 (SLIQDGPQCG…WAVASGILLG (121 aa)) is peptidase C39-like. Cys88 is a catalytic residue.

The protein belongs to the ACTMAP family.

Its subcellular location is the cytoplasm. The enzyme catalyses N-terminal N(alpha)-acetyl-L-methionyl-L-aspartyl-[protein] + H2O = N-terminal L-aspartyl-[protein] + N-acetyl-L-methionine. It catalyses the reaction N-terminal N(alpha)-acetyl-L-methionyl-L-glutamyl-[protein] + H2O = N-terminal L-glutamyl-[protein] + N-acetyl-L-methionine. The catalysed reaction is N-terminal N(alpha)-acetyl-L-cysteinyl-L-aspartyl-[protein] + H2O = N-terminal L-aspartyl-[protein] + N-acetyl-L-cysteine. It carries out the reaction N-terminal N(alpha)-acetyl-L-cysteinyl-L-glutamyl-[protein] + H2O = N-terminal L-glutamyl-[protein] + N-acetyl-L-cysteine. In terms of biological role, actin maturation protease that specifically mediates the cleavage of immature acetylated N-terminal actin, thereby contributing to actin maturation. Cleaves N-terminal acetylated methionine of immature cytoplasmic actin after translation. Cleaves N-terminal acetylated cysteine of muscle actin after canonical removal of N-terminal methionine. The protein is Actin maturation protease of Danio rerio (Zebrafish).